Here is a 143-residue protein sequence, read N- to C-terminus: Anti-sigma F factor (143 aa).

The protein belongs to the anti-sigma-factor family.

It carries out the reaction L-seryl-[protein] + ATP = O-phospho-L-seryl-[protein] + ADP + H(+). It catalyses the reaction L-threonyl-[protein] + ATP = O-phospho-L-threonyl-[protein] + ADP + H(+). Binds to sigma F and blocks its ability to form an RNA polymerase holoenzyme (E-sigma F). Phosphorylates SpoIIAA on a serine residue. This phosphorylation may enable SpoIIAA to act as an anti-anti-sigma factor that counteracts SpoIIAB and thus releases sigma F from inhibition. The chain is Anti-sigma F factor from Thermoanaerobacter pseudethanolicus (strain ATCC 33223 / 39E) (Clostridium thermohydrosulfuricum).